The sequence spans 487 residues: N-succinylglutamate 5-semialdehyde dehydrogenase (487 aa).

221 to 226 contributes to the NAD(+) binding site; it reads GSSDTG. Residues Glu244 and Cys278 contribute to the active site.

Belongs to the aldehyde dehydrogenase family. AstD subfamily.

The enzyme catalyses N-succinyl-L-glutamate 5-semialdehyde + NAD(+) + H2O = N-succinyl-L-glutamate + NADH + 2 H(+). It participates in amino-acid degradation; L-arginine degradation via AST pathway; L-glutamate and succinate from L-arginine: step 4/5. Its function is as follows. Catalyzes the NAD-dependent reduction of succinylglutamate semialdehyde into succinylglutamate. This chain is N-succinylglutamate 5-semialdehyde dehydrogenase, found in Burkholderia cenocepacia (strain HI2424).